The sequence spans 833 residues: Leucine--tRNA ligase (833 aa).

Residues 41-52 (PYPSGAGLHVGH) carry the 'HIGH' region motif. The short motif at 610-614 (KMSKS) is the 'KMSKS' region element. Residue lysine 613 coordinates ATP.

Belongs to the class-I aminoacyl-tRNA synthetase family.

It localises to the cytoplasm. It carries out the reaction tRNA(Leu) + L-leucine + ATP = L-leucyl-tRNA(Leu) + AMP + diphosphate. The sequence is that of Leucine--tRNA ligase from Streptococcus pyogenes serotype M28 (strain MGAS6180).